We begin with the raw amino-acid sequence, 426 residues long: Probable indole-3-pyruvate monooxygenase YUCCA8 (426 aa).

An FAD-binding site is contributed by 29 to 34; the sequence is GAGPSG. 199 to 204 provides a ligand contact to NADP(+); that stretch reads GCGNSG.

Belongs to the FMO family. It depends on FAD as a cofactor. As to expression, expressed in root tips and in hydathodes. Expressed in root vasculature and quiescent center, but not in the meristematic zone of the root tip.

The catalysed reaction is indole-3-pyruvate + NADPH + O2 + H(+) = (indol-3-yl)acetate + CO2 + NADP(+) + H2O. It participates in plant hormone metabolism; auxin biosynthesis. Its function is as follows. Involved in auxin biosynthesis. Belongs to the set of redundant YUCCA genes probably responsible for auxin biosynthesis in roots. The polypeptide is Probable indole-3-pyruvate monooxygenase YUCCA8 (YUC8) (Arabidopsis thaliana (Mouse-ear cress)).